Here is a 618-residue protein sequence, read N- to C-terminus: DNA mismatch repair protein MutL (618 aa).

This sequence belongs to the DNA mismatch repair MutL/HexB family.

Its function is as follows. This protein is involved in the repair of mismatches in DNA. It is required for dam-dependent methyl-directed DNA mismatch repair. May act as a 'molecular matchmaker', a protein that promotes the formation of a stable complex between two or more DNA-binding proteins in an ATP-dependent manner without itself being part of a final effector complex. In Bradyrhizobium sp. (strain BTAi1 / ATCC BAA-1182), this protein is DNA mismatch repair protein MutL.